A 322-amino-acid polypeptide reads, in one-letter code: Undecaprenyl-phosphate 4-deoxy-4-formamido-L-arabinose transferase (322 aa).

Residues 1–235 are Cytoplasmic-facing; it reads MFEIHPVKKV…TCLTTTPLRM (235 aa). A helical transmembrane segment spans residues 236–256; the sequence is LSLLGSIIAIGGFSIAVLLVI. Topologically, residues 257 to 269 are periplasmic; that stretch reads LRLTFGPQWAAEG. A helical membrane pass occupies residues 270 to 290; that stretch reads VFMLFAVLFTFIGAQFIGMGL. At 291–322 the chain is on the cytoplasmic side; sequence LGEYIGRIYTDVRARPRYFVQQVIRPSSKENE.

Belongs to the glycosyltransferase 2 family.

Its subcellular location is the cell inner membrane. It carries out the reaction UDP-4-deoxy-4-formamido-beta-L-arabinose + di-trans,octa-cis-undecaprenyl phosphate = 4-deoxy-4-formamido-alpha-L-arabinopyranosyl di-trans,octa-cis-undecaprenyl phosphate + UDP. The protein operates within glycolipid biosynthesis; 4-amino-4-deoxy-alpha-L-arabinose undecaprenyl phosphate biosynthesis; 4-amino-4-deoxy-alpha-L-arabinose undecaprenyl phosphate from UDP-4-deoxy-4-formamido-beta-L-arabinose and undecaprenyl phosphate: step 1/2. Its pathway is bacterial outer membrane biogenesis; lipopolysaccharide biosynthesis. Catalyzes the transfer of 4-deoxy-4-formamido-L-arabinose from UDP to undecaprenyl phosphate. The modified arabinose is attached to lipid A and is required for resistance to polymyxin and cationic antimicrobial peptides. This Escherichia coli (strain SMS-3-5 / SECEC) protein is Undecaprenyl-phosphate 4-deoxy-4-formamido-L-arabinose transferase.